The chain runs to 784 residues: Ubiquitin carboxyl-terminal hydrolase 1 (784 aa).

Disordered regions lie at residues 1–21 (MPGV…SKKN) and 34–56 (KRAL…RGSE). A compositionally biased stretch (polar residues) spans 7–16 (SESNGLSRGS). Phosphoserine is present on residues Ser-16 and Ser-42. A compositionally biased stretch (basic and acidic residues) spans 45–56 (NEEKTSEYRGSE). Ser-67 is subject to Phosphoserine. One can recognise a USP domain in the interval 81 to 784 (VGLNNLGNTC…TPYLLFYKKL (704 aa)). Cys-90 acts as the Nucleophile in catalysis. Composition is skewed to basic and acidic residues over residues 233 to 243 (VEEQSLQKEET) and 252 to 264 (DSMR…KEQL). 2 disordered regions span residues 233–342 (VEEQ…INWL) and 362–414 (TTNQ…KSGN). Position 474 is a phosphoserine (Ser-474). The active-site Proton acceptor is His-592. The disordered stretch occupies residues 684 to 725 (NPDKVVGTPFTDNRNSETNDTTNGTHESDRNKESSDQTGVNM). Positions 693–708 (FTDNRNSETNDTTNGT) are enriched in polar residues. Residues 709–718 (HESDRNKESS) are compositionally biased toward basic and acidic residues. Residue Ser-767 is modified to Phosphoserine.

The protein belongs to the peptidase C19 family. In terms of assembly, interacts with FANCD2 and PCNA. Interacts with WDR48. Interacts with ATAD5; the interaction regulates USP1-mediated PCNA deubiquitination. Post-translationally, autocatalytic cleavage of USP1 following UV irradiation inactivates it, leading to an increase in ubiquitinated PCNA, recruitment of POLH and translesion synthesis. In terms of processing, ubiquitinated by the CRL2(KLHDC2) complex following autocatalytic cleavage, leading to its degradation: the CRL2(KLHDC2) complex recognizes the diglycine (Gly-Gly) at the C-terminus.

The protein localises to the nucleus. It catalyses the reaction Thiol-dependent hydrolysis of ester, thioester, amide, peptide and isopeptide bonds formed by the C-terminal Gly of ubiquitin (a 76-residue protein attached to proteins as an intracellular targeting signal).. Functionally, negative regulator of DNA damage repair which specifically deubiquitinates monoubiquitinated FANCD2. Also involved in PCNA-mediated translesion synthesis (TLS) by deubiquitinating monoubiquitinated PCNA. Has almost no deubiquitinating activity by itself and requires the interaction with WDR48 to have a high activity. The polypeptide is Ubiquitin carboxyl-terminal hydrolase 1 (Mus musculus (Mouse)).